Reading from the N-terminus, the 258-residue chain is Axonemal dynein light intermediate polypeptide 1 (258 aa).

Disordered stretches follow at residues 1–60 (MIPP…CVPD) and 207–231 (VNEQ…EEKK). The span at 34–44 (SPQQPGPSGSA) shows a compositional bias: low complexity. A coiled-coil region spans residues 176-255 (MRKALQAEQG…LKAQLEGIIA (80 aa)).

The protein belongs to the inner dynein arm light chain family. Interacts with CFAP45. Interacts with DYNC1H1. As to expression, expressed in many tissues. A smaller 0.9 kb and a larger 2.5 kb transcripts were detected at the highest level in the testis, at medium levels in the prostate, heart, liver, lung and pancreas, at low levels in the ovary, skeletal muscle and small intestine. Not detected in spleen, colon epithelium, thymus or peripheral blood leukocytes. The 0.9 kb transcript is expressed at a 20-fold higher level than the 2.5 kb transcript in the testis. Expressed in spermatozoa and airway epithelial cells (at protein level).

It localises to the cell projection. Its subcellular location is the cilium. The protein localises to the flagellum. The protein resides in the dynein axonemal particle. It is found in the cytoplasm. In terms of biological role, involved in sperm flagellum assembly. In Homo sapiens (Human), this protein is Axonemal dynein light intermediate polypeptide 1.